Reading from the N-terminus, the 553-residue chain is Glycerol kinase 2 (553 aa).

Position 20 (T20) interacts with substrate. R24 provides a ligand contact to ATP. Positions 94, 148, and 259 each coordinate substrate. Residues T281, G326, and 427 to 431 (GMTNN) contribute to the ATP site. Residues 526-546 (IFSSLPLGFFIVSSMVMLIGA) form a helical membrane-spanning segment.

The protein belongs to the FGGY kinase family. Interacts with ARMC12. Interacts with PLD6. In terms of tissue distribution, testis-specific. Expressed in the midpiece of spermatozoa.

Its subcellular location is the mitochondrion outer membrane. The protein localises to the cytoplasm. It catalyses the reaction glycerol + ATP = sn-glycerol 3-phosphate + ADP + H(+). The protein operates within polyol metabolism; glycerol degradation via glycerol kinase pathway; sn-glycerol 3-phosphate from glycerol: step 1/1. Its function is as follows. Key enzyme in the regulation of glycerol uptake and metabolism. Essential for male fertility and sperm mitochondrial sheath formation. Required for proper arrangement of crescent-like mitochondria to form the mitochondrial sheath during spermatogenesis. Can induce mitochondrial clustering through interactions with PLD6 and up-regulation of phosphatidic acid synthesis in the mitochondria. The sequence is that of Glycerol kinase 2 (GK2) from Homo sapiens (Human).